Here is a 126-residue protein sequence, read N- to C-terminus: Histone H2B type 2-E (126 aa).

Low complexity predominate over residues M1–K12. Positions M1–K35 are disordered. Position 2 is an N-acetylproline (P2). E3 carries the ADP-ribosyl glutamic acid modification. K6 bears the N6-(2-hydroxyisobutyryl)lysine; alternate mark. An N6-(beta-hydroxybutyryl)lysine; alternate modification is found at K6. K6 is subject to N6-acetyllysine; alternate. K6 is modified (N6-butyryllysine; alternate). Residue K6 is modified to N6-crotonyllysine; alternate. N6-lactoyllysine; alternate is present on K6. K6 is covalently cross-linked (Glycyl lysine isopeptide (Lys-Gly) (interchain with G-Cter in SUMO2); alternate). S7 carries the post-translational modification ADP-ribosylserine. K12 is subject to N6-(beta-hydroxybutyryl)lysine; alternate. N6-acetyllysine; alternate is present on residues K12 and K13. An N6-crotonyllysine; alternate mark is found at K12 and K13. Position 12 is an N6-lactoyllysine; alternate (K12). N6-(2-hydroxyisobutyryl)lysine; alternate is present on K13. Residue S15 is modified to Phosphoserine; by STK4/MST1. 4 positions are modified to N6-acetyllysine; alternate: K16, K17, K21, and K24. N6-crotonyllysine; alternate is present on residues K16, K17, K21, and K24. K16, K17, K21, and K24 each carry N6-lactoyllysine; alternate. N6-(beta-hydroxybutyryl)lysine; alternate occurs at positions 17 and 21. K17 is subject to N6-glutaryllysine; alternate. N6-(2-hydroxyisobutyryl)lysine; alternate is present on residues K21 and K24. K21 carries the post-translational modification N6-butyryllysine; alternate. Residue K21 forms a Glycyl lysine isopeptide (Lys-Gly) (interchain with G-Cter in SUMO2); alternate linkage. K25 is modified (N6-(2-hydroxyisobutyryl)lysine). K35 bears the N6-(2-hydroxyisobutyryl)lysine; alternate mark. K35 carries the post-translational modification N6-(beta-hydroxybutyryl)lysine; alternate. An N6-crotonyllysine; alternate modification is found at K35. At K35 the chain carries N6-glutaryllysine; alternate. K35 bears the N6-succinyllysine; alternate mark. K35 is covalently cross-linked (Glycyl lysine isopeptide (Lys-Gly) (interchain with G-Cter in ubiquitin); alternate). PolyADP-ribosyl glutamic acid is present on E36. S37 carries the phosphoserine; by AMPK modification. Residues K44, K47, and K58 each carry the N6-(2-hydroxyisobutyryl)lysine; alternate modification. The residue at position 44 (K44) is an N6-lactoyllysine; alternate. 2 positions are modified to N6-glutaryllysine; alternate: K44 and K47. K47 is subject to N6-methyllysine; alternate. Position 58 is an N6,N6-dimethyllysine; alternate (K58). R80 bears the Dimethylated arginine mark. The residue at position 86 (K86) is an N6-(2-hydroxyisobutyryl)lysine; alternate. Position 86 is an N6-(beta-hydroxybutyryl)lysine; alternate (K86). The residue at position 86 (K86) is an N6-acetyllysine; alternate. The residue at position 86 (K86) is an N6-lactoyllysine; alternate. Position 86 is an N6,N6,N6-trimethyllysine; alternate (K86). Residues R87 and R93 each carry the omega-N-methylarginine modification. At K109 the chain carries N6-(2-hydroxyisobutyryl)lysine; alternate. K109 carries the N6-lactoyllysine; alternate modification. K109 is subject to N6-glutaryllysine; alternate. K109 carries the post-translational modification N6-methyllysine; alternate. S113 carries O-linked (GlcNAc) serine glycosylation. T116 is subject to Phosphothreonine. N6-(2-hydroxyisobutyryl)lysine; alternate occurs at positions 117 and 121. 2 positions are modified to N6-(beta-hydroxybutyryl)lysine; alternate: K117 and K121. 2 positions are modified to N6-lactoyllysine; alternate: K117 and K121. N6-glutaryllysine; alternate is present on residues K117 and K121. 2 positions are modified to N6-succinyllysine; alternate: K117 and K121. N6-malonyllysine; alternate is present on K117. At K117 the chain carries N6-methylated lysine; alternate. K121 participates in a covalent cross-link: Glycyl lysine isopeptide (Lys-Gly) (interchain with G-Cter in ubiquitin); alternate.

This sequence belongs to the histone H2B family. In terms of assembly, the nucleosome is a histone octamer containing two molecules each of H2A, H2B, H3 and H4 assembled in one H3-H4 heterotetramer and two H2A-H2B heterodimers. The octamer wraps approximately 147 bp of DNA. Monoubiquitination at Lys-35 (H2BK34Ub) by the MSL1/MSL2 dimer is required for histone H3 'Lys-4' (H3K4me) and 'Lys-79' (H3K79me) methylation and transcription activation at specific gene loci, such as HOXA9 and MEIS1 loci. Similarly, monoubiquitination at Lys-121 (H2BK120Ub) by the RNF20/40 complex gives a specific tag for epigenetic transcriptional activation and is also prerequisite for histone H3 'Lys-4' and 'Lys-79' methylation. It also functions cooperatively with the FACT dimer to stimulate elongation by RNA polymerase II. H2BK120Ub also acts as a regulator of mRNA splicing: deubiquitination by USP49 is required for efficient cotranscriptional splicing of a large set of exons. In terms of processing, phosphorylation at Ser-37 (H2BS36ph) by AMPK in response to stress promotes transcription. Phosphorylated on Ser-15 (H2BS14ph) by STK4/MST1 during apoptosis; which facilitates apoptotic chromatin condensation. Also phosphorylated on Ser-15 in response to DNA double strand breaks (DSBs), and in correlation with somatic hypermutation and immunoglobulin class-switch recombination. Post-translationally, glcNAcylation at Ser-113 promotes monoubiquitination of Lys-121. It fluctuates in response to extracellular glucose, and associates with transcribed genes. ADP-ribosylated by PARP1 or PARP2 on Ser-7 (H2BS6ADPr) in response to DNA damage. H2BS6ADPr promotes recruitment of CHD1L. Mono-ADP-ribosylated on Glu-3 (H2BE2ADPr) by PARP3 in response to single-strand breaks. Poly ADP-ribosylation on Glu-36 (H2BE35ADPr) by PARP1 regulates adipogenesis: it inhibits phosphorylation at Ser-37 (H2BS36ph), thereby blocking expression of pro-adipogenetic genes. In terms of processing, crotonylation (Kcr) is specifically present in male germ cells and marks testis-specific genes in post-meiotic cells, including X-linked genes that escape sex chromosome inactivation in haploid cells. Crotonylation marks active promoters and enhancers and confers resistance to transcriptional repressors. It is also associated with post-meiotically activated genes on autosomes. Post-translationally, lactylated in macrophages by EP300/P300 by using lactoyl-CoA directly derived from endogenous or exogenous lactate, leading to stimulates gene transcription.

It is found in the nucleus. It localises to the chromosome. In terms of biological role, core component of nucleosome. Nucleosomes wrap and compact DNA into chromatin, limiting DNA accessibility to the cellular machineries which require DNA as a template. Histones thereby play a central role in transcription regulation, DNA repair, DNA replication and chromosomal stability. DNA accessibility is regulated via a complex set of post-translational modifications of histones, also called histone code, and nucleosome remodeling. Functionally, has broad antibacterial activity. May contribute to the formation of the functional antimicrobial barrier of the colonic epithelium, and to the bactericidal activity of amniotic fluid. This is Histone H2B type 2-E from Homo sapiens (Human).